The sequence spans 267 residues: NAD kinase 2 (267 aa).

Aspartate 52 serves as the catalytic Proton acceptor. Residues 52–53, 124–125, arginine 151, aspartate 153, 164–169, and alanine 188 each bind NAD(+); these read DG, NE, and TGYNKS.

This sequence belongs to the NAD kinase family. A divalent metal cation serves as cofactor.

It is found in the cytoplasm. It catalyses the reaction NAD(+) + ATP = ADP + NADP(+) + H(+). Functionally, involved in the regulation of the intracellular balance of NAD and NADP, and is a key enzyme in the biosynthesis of NADP. Catalyzes specifically the phosphorylation on 2'-hydroxyl of the adenosine moiety of NAD to yield NADP. The polypeptide is NAD kinase 2 (Geobacillus kaustophilus (strain HTA426)).